The following is a 111-amino-acid chain: Phosphoribosyl-ATP pyrophosphatase (111 aa).

It belongs to the PRA-PH family.

It localises to the cytoplasm. The catalysed reaction is 1-(5-phospho-beta-D-ribosyl)-ATP + H2O = 1-(5-phospho-beta-D-ribosyl)-5'-AMP + diphosphate + H(+). The protein operates within amino-acid biosynthesis; L-histidine biosynthesis; L-histidine from 5-phospho-alpha-D-ribose 1-diphosphate: step 2/9. The sequence is that of Phosphoribosyl-ATP pyrophosphatase from Pseudomonas putida (strain ATCC 700007 / DSM 6899 / JCM 31910 / BCRC 17059 / LMG 24140 / F1).